The primary structure comprises 353 residues: MRKAFTRIRLRNNRYAAYIIGFSFLAVSIILGISCGSLHIPIPAVFRVFWHQGFGGSIGSDDPMYTNIMMNIRLPRVVLAALVGAALSIAGAAFQGLLKNPLADPYTLGVSSGASVGAVVTLFLGLHLPVIGGFTLPVLSVAAALATMAAVLFFSRLVHASMSVSTLILTGVITNSFLGAFISLIIALTGDNLLPIVHWLLGSVSMRGWSYVILFLPFFLLGTILLIINGRELNVMTYGEDKAKLLGVSVQQRKMMILIAGSLLTGSAVAVSGTIGFVGLVIPHITRLLWGTDHRHLLPLSALLGAGFLVLADLLSRTIIEPIELPIGIITSLAGAPVFALILIRQHRGGRSL.

The next 9 membrane-spanning stretches (helical) occupy residues 16–36 (AAYIIGFSFLAVSIILGISCG), 77–97 (VVLAALVGAALSIAGAAFQGL), 106–128 (YTLGVSSGASVGAVVTLFLGLHL), 140–160 (SVAAALATMAAVLFFSRLVHA), 167–187 (LILTGVITNSFLGAFISLIIA), 208–228 (GWSYVILFLPFFLLGTILLII), 263–283 (LLTGSAVAVSGTIGFVGLVIP), 296–316 (HLLPLSALLGAGFLVLADLLS), and 323–343 (IELPIGIITSLAGAPVFALIL).

Belongs to the binding-protein-dependent transport system permease family. FecCD subfamily. The complex is composed of two ATP-binding proteins (YvrA), two transmembrane proteins (YvrB) and a solute-binding protein (YvrC).

Its subcellular location is the cell membrane. Its function is as follows. Probably part of an ABC transporter complex. Probably responsible for the translocation of the substrate across the membrane. This is an uncharacterized protein from Bacillus subtilis (strain 168).